The following is a 175-amino-acid chain: Crossover junction endodeoxyribonuclease RuvC (175 aa).

Catalysis depends on residues Asp16, Glu76, and Asp148. 3 residues coordinate Mg(2+): Asp16, Glu76, and Asp148.

This sequence belongs to the RuvC family. In terms of assembly, homodimer which binds Holliday junction (HJ) DNA. The HJ becomes 2-fold symmetrical on binding to RuvC with unstacked arms; it has a different conformation from HJ DNA in complex with RuvA. In the full resolvosome a probable DNA-RuvA(4)-RuvB(12)-RuvC(2) complex forms which resolves the HJ. The cofactor is Mg(2+).

The protein localises to the cytoplasm. It carries out the reaction Endonucleolytic cleavage at a junction such as a reciprocal single-stranded crossover between two homologous DNA duplexes (Holliday junction).. The RuvA-RuvB-RuvC complex processes Holliday junction (HJ) DNA during genetic recombination and DNA repair. Endonuclease that resolves HJ intermediates. Cleaves cruciform DNA by making single-stranded nicks across the HJ at symmetrical positions within the homologous arms, yielding a 5'-phosphate and a 3'-hydroxyl group; requires a central core of homology in the junction. The consensus cleavage sequence is 5'-(A/T)TT(C/G)-3'. Cleavage occurs on the 3'-side of the TT dinucleotide at the point of strand exchange. HJ branch migration catalyzed by RuvA-RuvB allows RuvC to scan DNA until it finds its consensus sequence, where it cleaves and resolves the cruciform DNA. In Rhodopseudomonas palustris (strain BisB18), this protein is Crossover junction endodeoxyribonuclease RuvC.